We begin with the raw amino-acid sequence, 465 residues long: Methylenetetrahydrofolate--tRNA-(uracil-5-)-methyltransferase TrmFO (465 aa).

10 to 15 (GAGLAG) contributes to the FAD binding site.

Belongs to the MnmG family. TrmFO subfamily. It depends on FAD as a cofactor.

It localises to the cytoplasm. The catalysed reaction is uridine(54) in tRNA + (6R)-5,10-methylene-5,6,7,8-tetrahydrofolate + NADH + H(+) = 5-methyluridine(54) in tRNA + (6S)-5,6,7,8-tetrahydrofolate + NAD(+). The enzyme catalyses uridine(54) in tRNA + (6R)-5,10-methylene-5,6,7,8-tetrahydrofolate + NADPH + H(+) = 5-methyluridine(54) in tRNA + (6S)-5,6,7,8-tetrahydrofolate + NADP(+). Its function is as follows. Catalyzes the folate-dependent formation of 5-methyl-uridine at position 54 (M-5-U54) in all tRNAs. This Deinococcus radiodurans (strain ATCC 13939 / DSM 20539 / JCM 16871 / CCUG 27074 / LMG 4051 / NBRC 15346 / NCIMB 9279 / VKM B-1422 / R1) protein is Methylenetetrahydrofolate--tRNA-(uracil-5-)-methyltransferase TrmFO.